Reading from the N-terminus, the 864-residue chain is Probable beta-glucosidase J (864 aa).

The active site involves Asp-233. Positions 411-578 (TGEPGYTFRV…DTDAAIQQAV (168 aa)) constitute a PA14 domain. Residues Asn-434, Asn-447, and Asn-503 are each glycosylated (N-linked (GlcNAc...) asparagine).

Belongs to the glycosyl hydrolase 3 family.

The protein localises to the secreted. It catalyses the reaction Hydrolysis of terminal, non-reducing beta-D-glucosyl residues with release of beta-D-glucose.. It functions in the pathway glycan metabolism; cellulose degradation. Its function is as follows. Beta-glucosidases are one of a number of cellulolytic enzymes involved in the degradation of cellulosic biomass. Catalyzes the last step releasing glucose from the inhibitory cellobiose. The chain is Probable beta-glucosidase J (bglJ) from Neosartorya fischeri (strain ATCC 1020 / DSM 3700 / CBS 544.65 / FGSC A1164 / JCM 1740 / NRRL 181 / WB 181) (Aspergillus fischerianus).